We begin with the raw amino-acid sequence, 249 residues long: Cell division protein FtsQ (249 aa).

The Cytoplasmic portion of the chain corresponds to 1–6; it reads MKFILF. The chain crosses the membrane as a helical span at residues 7–23; it reads ALLVSAGSWYGWKQLHS. Topologically, residues 24 to 249 are periplasmic; sequence QDAVSKPIRY…YKNVMKERRI (226 aa). The POTRA domain occupies 29 to 98; the sequence is KPIRYVKIEG…DAVHIKITEQ (70 aa).

The protein belongs to the FtsQ/DivIB family. FtsQ subfamily. In terms of assembly, part of a complex composed of FtsB, FtsL and FtsQ.

The protein localises to the cell inner membrane. In terms of biological role, essential cell division protein. May link together the upstream cell division proteins, which are predominantly cytoplasmic, with the downstream cell division proteins, which are predominantly periplasmic. May control correct divisome assembly. The polypeptide is Cell division protein FtsQ (Methylomonas methanica (strain DSM 25384 / MC09)).